Reading from the N-terminus, the 334-residue chain is Catabolite repressor/activator (334 aa).

Residues 1–58 (MKLDEIARLAGVSRTTASYVINGKAKQYRVSDKTVEKVMAVVREHNYHPNAVAAGLRA) enclose the HTH lacI-type domain. The H-T-H motif DNA-binding region spans 3–22 (LDEIARLAGVSRTTASYVIN).

As to quaternary structure, homotetramer.

Functionally, global transcriptional regulator, which plays an important role in the regulation of carbon metabolism. The protein is Catabolite repressor/activator (cra) of Escherichia coli O157:H7.